The following is a 579-amino-acid chain: Cyclin-T1-5 (579 aa).

Disordered stretches follow at residues 1–27 and 271–419; these read MAGV…HEKQ and RVPA…GDAL. Over residues 11-20 the composition is skewed to polar residues; it reads YSESGVSSHS. Over residues 274-283 the composition is skewed to low complexity; sequence ASQGSEVESS. A compositionally biased stretch (polar residues) spans 306-334; the sequence is SRQTSSVRSTHEQSNSDNHGGSSKGVLNQ. 2 stretches are compositionally biased toward basic and acidic residues: residues 349 to 380 and 389 to 414; these read DNKE…EAPH and PGKD…RNVD. Serine 423 carries the phosphoserine modification. Basic and acidic residues-rich tracts occupy residues 474–512, 538–556, and 563–579; these read DEKT…KNTE, KQSE…ESHK, and HHGD…NNHS. Residues 474 to 579 are disordered; that stretch reads DEKTKERKVQ…RRHSQENNHS (106 aa).

The protein belongs to the cyclin family. Cyclin T subfamily.

In Arabidopsis thaliana (Mouse-ear cress), this protein is Cyclin-T1-5 (CYCT1-5).